An 84-amino-acid polypeptide reads, in one-letter code: MIWTAVIKGSALMTFVQGAMALVDKVFGEEILPHRIYSSGEAAQLLGMERLQVLEMVRAGTIKAKKVGDNYRILGSNLVEYMNR.

Belongs to the magnetosome MamR family.

The protein localises to the magnetosome. May play a role in controlling magnetite number and size. Coexpression of mamLQRBIEMO in a deletion of the 17 gene mamAB operon restores magnetosome vesicle formation but not magnetite biosynthesis. The polypeptide is Magnetosome protein MamR (Magnetospirillum gryphiswaldense (strain DSM 6361 / JCM 21280 / NBRC 15271 / MSR-1)).